The following is a 338-amino-acid chain: DNA-directed RNA polymerase subunit alpha (338 aa).

Residues 1–226 (MLIAQRPTLT…ELFGLARELN (226 aa)) form an alpha N-terminal domain (alpha-NTD) region. The tract at residues 243-338 (LAADLALPIE…DADYADEQYN (96 aa)) is alpha C-terminal domain (alpha-CTD).

The protein belongs to the RNA polymerase alpha chain family. In terms of assembly, homodimer. The RNAP catalytic core consists of 2 alpha, 1 beta, 1 beta' and 1 omega subunit. When a sigma factor is associated with the core the holoenzyme is formed, which can initiate transcription.

It carries out the reaction RNA(n) + a ribonucleoside 5'-triphosphate = RNA(n+1) + diphosphate. DNA-dependent RNA polymerase catalyzes the transcription of DNA into RNA using the four ribonucleoside triphosphates as substrates. The protein is DNA-directed RNA polymerase subunit alpha of Beutenbergia cavernae (strain ATCC BAA-8 / DSM 12333 / CCUG 43141 / JCM 11478 / NBRC 16432 / NCIMB 13614 / HKI 0122).